The primary structure comprises 39 residues: SPbeta prophage-derived uncharacterized protein YorT (39 aa).

The sequence is that of SPbeta prophage-derived uncharacterized protein YorT (yorT) from Bacillus subtilis (strain 168).